Consider the following 329-residue polypeptide: Isopenicillin N synthase (329 aa).

The isopenicillin N site is built by arginine 87, tyrosine 91, and tyrosine 189. N-[(5S)-5-amino-5-carboxypentanoyl]-L-cysteinyl-D-valine-binding residues include arginine 87, tyrosine 91, tyrosine 189, histidine 212, and aspartate 214. The 107-residue stretch at 180–286 (TLSAVTLIHY…RLSLPFFLHA (107 aa)) folds into the Fe2OG dioxygenase domain. The Fe(2+) site is built by histidine 212, aspartate 214, and histidine 268. Arginine 277 is a binding site for 2-oxoglutarate. Serine 279 is an isopenicillin N binding site. Residue serine 279 participates in N-[(5S)-5-amino-5-carboxypentanoyl]-L-cysteinyl-D-valine binding.

It belongs to the iron/ascorbate-dependent oxidoreductase family. It depends on Fe cation as a cofactor. L-ascorbate serves as cofactor.

It carries out the reaction N-[(5S)-5-amino-5-carboxypentanoyl]-L-cysteinyl-D-valine + O2 = isopenicillin N + 2 H2O. It functions in the pathway antibiotic biosynthesis; penicillin G biosynthesis; penicillin G from L-alpha-aminoadipate and L-cysteine and L-valine: step 2/3. Removes, in the presence of oxygen, 4 hydrogen atoms from delta-L-(alpha-aminoadipyl)-L-cysteinyl-D-valine (ACV) to form the azetidinone and thiazolidine rings of isopenicillin. This is Isopenicillin N synthase (pcbC) from Streptomyces griseus.